The following is a 2581-amino-acid chain: Chromodomain-helicase-DNA-binding protein 8 (2581 aa).

3 disordered regions span residues 22–114 (DDSF…QTST), 253–281 (VKGS…TPAQ), and 349–375 (QKIQ…PLTL). Polar residues-rich tracts occupy residues 42–64 (SLDS…SSAS) and 94–114 (DYTT…QTST). Over residues 255-267 (GSAPAGNPGATGP) the composition is skewed to low complexity. Residues 355-370 (PQPPSSQPQPQPPPSA) are compositionally biased toward pro residues. S432 carries the phosphoserine modification. Disordered regions lie at residues 473–584 (RARG…KRKK) and 596–616 (DEEE…ILPE). Basic and acidic residues predominate over residues 493–516 (RPEEEGEKKRRKKSSGERLKEEKP). Phosphoserine is present on residues S553 and S562. Positions 572–584 (QKRRSNRQVKRKK) are enriched in basic residues. A Glycyl lysine isopeptide (Lys-Gly) (interchain with G-Cter in SUMO) cross-link involves residue K609. Chromo domains follow at residues 642-709 (AIVD…AQMR) and 724-790 (VEVD…RVNR). The Helicase ATP-binding domain maps to 823 to 997 (LFNWYNRQNC…FSLLHFLEPS (175 aa)). 836–843 (DEMGLGKT) is an ATP binding site. A DEAH box motif is present at residues 948–951 (DEAH). The Helicase C-terminal domain maps to 1137-1288 (LIDKLLPKLK…KAVLQSMSGR (152 aa)). Phosphoserine occurs at positions 1420 and 1424. The segment at 1692 to 1713 (EDPEYKPLQGPPKDPDDEGDPL) is disordered. Residues 1789 to 2302 (IARREKQQRW…LVELEVECME (514 aa)) form an interaction with FAM124B region. 2 positions are modified to phosphoserine: S1976 and S1978. Residues 1988-2016 (QCTSRTASPSPLRPDVPAEKSPEENAVQV) are disordered. T1993 bears the Phosphothreonine mark. A phosphoserine mark is found at S1995, S1997, and S2008. K2025 is covalently cross-linked (Glycyl lysine isopeptide (Lys-Gly) (interchain with G-Cter in SUMO2)). 2 disordered regions span residues 2047-2118 (SSDT…YDEE) and 2179-2221 (NRRS…SSSA). The span at 2063-2072 (EDDDDSDSEL) shows a compositional bias: acidic residues. Residues S2068 and S2070 each carry the phosphoserine modification. A compositionally biased stretch (low complexity) spans 2075–2094 (SKLSPSSSSSSSSSSSSSSS). The span at 2102–2116 (EEKLTADRSRPKLYD) shows a compositional bias: basic and acidic residues. Phosphoserine is present on residues S2182, S2200, and S2202. Residue T2204 is modified to Phosphothreonine. S2211 bears the Phosphoserine mark. At T2215 the chain carries Phosphothreonine. S2223 is subject to Phosphoserine. Residue K2256 forms a Glycyl lysine isopeptide (Lys-Gly) (interchain with G-Cter in SUMO2) linkage. Positions 2484-2581 (PHVDSSTMLH…NSDSSDDADD (98 aa)) are disordered. Over residues 2492–2510 (LHHHHHHPHPHHHHHHHPG) the composition is skewed to basic residues. Residues 2513 to 2528 (TTGYPSSPATTTSGTA) show a composition bias toward low complexity. S2519 carries the post-translational modification Phosphoserine. Over residues 2537 to 2550 (EDDDEEEDEDDDDL) the composition is skewed to acidic residues. Residues 2565 to 2574 (DDPMMPANSD) are compositionally biased toward low complexity.

This sequence belongs to the SNF2/RAD54 helicase family. CHD8 subfamily. Interacts with p53/TP53, histone H1 and CTCF. Component of some MLL1/MLL complex, at least composed of the core components KMT2A/MLL1, ASH2L, HCFC1/HCF1, WDR5 and RBBP5, as well as the facultative components BACC1, CHD8, E2F6, HSP70, INO80C, KANSL1, LAS1L, MAX, MCRS1, MGA, KAT8/MOF, PELP1, PHF20, PRP31, RING2, RUVB1/TIP49A, RUVB2/TIP49B, SENP3, TAF1, TAF4, TAF6, TAF7, TAF9 and TEX10. Interacts with CHD7. Interacts with FAM124B. Interacts with CTNNB1. Interacts with PIAS3. Interacts with TLK2. Interacts with HNRNPL in an RNA-dependent manner. In terms of processing, sumoylated.

Its subcellular location is the nucleus. The enzyme catalyses ATP + H2O = ADP + phosphate + H(+). Its function is as follows. ATP-dependent chromatin-remodeling factor, it slides nucleosomes along DNA; nucleosome sliding requires ATP. Acts as a transcription repressor by remodeling chromatin structure and recruiting histone H1 to target genes. Suppresses p53/TP53-mediated apoptosis by recruiting histone H1 and preventing p53/TP53 transactivation activity. Acts as a negative regulator of Wnt signaling pathway by regulating beta-catenin (CTNNB1) activity. Negatively regulates CTNNB1-targeted gene expression by being recruited specifically to the promoter regions of several CTNNB1 responsive genes. Involved in both enhancer blocking and epigenetic remodeling at chromatin boundary via its interaction with CTCF. Acts as a suppressor of STAT3 activity by suppressing the LIF-induced STAT3 transcriptional activity. Also acts as a transcription activator via its interaction with ZNF143 by participating in efficient U6 RNA polymerase III transcription. Regulates alternative splicing of a core group of genes involved in neuronal differentiation, cell cycle and DNA repair. Enables H3K36me3-coupled transcription elongation and co-transcriptional RNA processing likely via interaction with HNRNPL. The protein is Chromodomain-helicase-DNA-binding protein 8 of Rattus norvegicus (Rat).